The following is a 69-amino-acid chain: MFTLKKTLLLLFFLGTISISLCKQARDADEDDGRKMTEEEVKRSIITMTREAKLPQLWKQIACRLYNTC.

A signal peptide spans 1–22 (MFTLKKTLLLLFFLGTISISLC). The propeptide occupies 23-43 (KQARDADEDDGRKMTEEEVKR). Cysteines 63 and 69 form a disulfide.

This sequence belongs to the frog skin active peptide (FSAP) family. Pleurain subfamily. As to expression, expressed by the skin glands.

The protein localises to the secreted. Antimicrobial peptide. Has activity against Gram-positive and -negative bacteria, and fungi. Has little hemolytic activity on red blood cells. This Nidirana pleuraden (Yunnan pond frog) protein is Pleurain-A3.